A 102-amino-acid chain; its full sequence is Small ribosomal subunit protein uS10 (102 aa).

The protein belongs to the universal ribosomal protein uS10 family. As to quaternary structure, part of the 30S ribosomal subunit.

In terms of biological role, involved in the binding of tRNA to the ribosomes. In Cupriavidus metallidurans (strain ATCC 43123 / DSM 2839 / NBRC 102507 / CH34) (Ralstonia metallidurans), this protein is Small ribosomal subunit protein uS10.